A 67-amino-acid chain; its full sequence is UPF0253 protein VS_2370 (67 aa).

It belongs to the UPF0253 family.

The sequence is that of UPF0253 protein VS_2370 from Vibrio atlanticus (strain LGP32) (Vibrio splendidus (strain Mel32)).